A 415-amino-acid polypeptide reads, in one-letter code: D-galactonate dehydratase family member RspA (415 aa).

Substrate contacts are provided by Asn48 and His133. Tyr170 (proton donor/acceptor) is an active-site residue. Asp223 contributes to the Mg(2+) binding site. Catalysis depends on His225, which acts as the Proton donor/acceptor. Residues Glu249, Asp250, and Glu275 each contribute to the Mg(2+) site. Positions 275, 296, 325, 329, and 352 each coordinate substrate.

This sequence belongs to the mandelate racemase/muconate lactonizing enzyme family. GalD subfamily. Mg(2+) serves as cofactor.

It catalyses the reaction D-mannonate = 2-dehydro-3-deoxy-D-gluconate + H2O. Has low D-mannonate dehydratase activity (in vitro), suggesting that this is not a physiological substrate and that it has no significant role in D-mannonate degradation in vivo. Has no detectable activity with a panel of 70 other acid sugars (in vitro). In Escherichia coli O6:H1 (strain CFT073 / ATCC 700928 / UPEC), this protein is D-galactonate dehydratase family member RspA (rspA).